Reading from the N-terminus, the 65-residue chain is Conotoxin Lp5.1 (65 aa).

The signal sequence occupies residues 1-22 (MRCVPVFIILLLLIPSAPSVDA). Positions 23 to 50 (QRKTKDDVPLASFHDNAKRTLKRLWNKR) are excised as a propeptide.

Belongs to the conotoxin T superfamily. Contains 2 disulfide bonds that can be either 'C1-C3, C2-C4' or 'C1-C4, C2-C3', since these disulfide connectivities have been observed for conotoxins with cysteine framework V (for examples, see AC P0DQQ7 and AC P81755). Expressed by the venom duct.

The protein localises to the secreted. The sequence is that of Conotoxin Lp5.1 from Conus leopardus (Leopard cone).